Reading from the N-terminus, the 341-residue chain is Uroporphyrinogen decarboxylase (341 aa).

Residues 23 to 27 (RQAGR), phenylalanine 42, aspartate 73, tyrosine 148, serine 203, and histidine 318 contribute to the substrate site.

Belongs to the uroporphyrinogen decarboxylase family. Homodimer.

The protein resides in the cytoplasm. It carries out the reaction uroporphyrinogen III + 4 H(+) = coproporphyrinogen III + 4 CO2. It functions in the pathway porphyrin-containing compound metabolism; protoporphyrin-IX biosynthesis; coproporphyrinogen-III from 5-aminolevulinate: step 4/4. Its function is as follows. Catalyzes the decarboxylation of four acetate groups of uroporphyrinogen-III to yield coproporphyrinogen-III. This chain is Uroporphyrinogen decarboxylase, found in Brucella melitensis biotype 1 (strain ATCC 23456 / CCUG 17765 / NCTC 10094 / 16M).